The chain runs to 319 residues: MTTQTSTGLRHQTVLLDEAVDALIWRDDGIYIDGTFGRGGHSRRILERLGPGGRLVAFDKDPAAITEAGTVEDARFAIEHDSFAQMAQCLDARGIERVAGVLLDLGISSPQIDEGERGFSFRMDGPLDMRMDTTRGITAAQWLAEADERDIARVIRDYGEERFAVQIAKAIVARRGQSGDRGPLDRTSELAALVAQAVKTREKGQDPATRTFQALRIHVNQELADLETGLKAAFDRLEQGGRLVVISFHSLEDRIVKRFMQALARPEQSAAPELRRAPLRAHELPAPQLRLLGRVKPSEAEVSANPRARSAIMRVAERC.

S-adenosyl-L-methionine-binding positions include 39–41 (GGH), Asp-59, Phe-83, Asp-104, and Gln-111.

Belongs to the methyltransferase superfamily. RsmH family.

It localises to the cytoplasm. The enzyme catalyses cytidine(1402) in 16S rRNA + S-adenosyl-L-methionine = N(4)-methylcytidine(1402) in 16S rRNA + S-adenosyl-L-homocysteine + H(+). Specifically methylates the N4 position of cytidine in position 1402 (C1402) of 16S rRNA. The protein is Ribosomal RNA small subunit methyltransferase H of Ralstonia pickettii (strain 12D).